Reading from the N-terminus, the 312-residue chain is DNA-directed RNA polymerase subunit alpha (312 aa).

The segment at 1–229 is alpha N-terminal domain (alpha-NTD); the sequence is MLQYQIDRID…ELFQPLATVT (229 aa). The segment at 246–312 is alpha C-terminal domain (alpha-CTD); it reads IPLEELNLSV…ISIPQSRTSV (67 aa).

Belongs to the RNA polymerase alpha chain family. In cyanobacteria the RNAP catalytic core is composed of 2 alpha, 1 beta, 1 beta', 1 gamma and 1 omega subunit. When a sigma factor is associated with the core the holoenzyme is formed, which can initiate transcription.

The catalysed reaction is RNA(n) + a ribonucleoside 5'-triphosphate = RNA(n+1) + diphosphate. Its function is as follows. DNA-dependent RNA polymerase catalyzes the transcription of DNA into RNA using the four ribonucleoside triphosphates as substrates. The chain is DNA-directed RNA polymerase subunit alpha from Prochlorococcus marinus subsp. pastoris (strain CCMP1986 / NIES-2087 / MED4).